An 829-amino-acid chain; its full sequence is Genome polyprotein (829 aa).

Position 2 is an N-acetylserine; by host (S2). The tract at residues S2–K23 is interaction with STAT1. The segment at S2 to P58 is interaction with EIF2AK2/PKR. An interaction with DDX3X region spans residues S2–R59. Residues S2–N75 are disordered. The Cytoplasmic portion of the chain corresponds to S2–N168. Short sequence motifs (nuclear localization signal) lie at residues P5–R13 and P38–R43. Basic residues predominate over residues P7–N16. A compositionally biased stretch (low complexity) spans G32 to R47. A Phosphoserine; by host modification is found at S53. Short sequence motifs (nuclear localization signal) lie at residues P58–P64 and P66–P71. Positions P58–G73 are enriched in basic residues. A Phosphoserine; by host modification is found at S99. Residues P112–A152 are important for endoplasmic reticulum and mitochondrial localization. The residue at position 116 (S116) is a Phosphoserine; by host PKA. The interval V122–S173 is interaction with APOA2. Residues Y164 to G167 are important for lipid droplets localization. A helical membrane pass occupies residues L169–A189. The propeptide at L178–A191 is ER anchor for the core protein, removed in mature form by host signal peptidase. Residues S190–G358 lie on the Lumenal side of the membrane. 3 N-linked (GlcNAc...) asparagine; by host glycosylation sites follow: N196, N209, and N234. Positions L265–R296 are important for fusion. N-linked (GlcNAc...) asparagine; by host glycosylation occurs at N305. Residues M359–A379 traverse the membrane as a helical segment. Over G380–L725 the chain is Lumenal. Residues T385–V411 are HVR1. N417, N423, N430, and N448 each carry an N-linked (GlcNAc...) (high mannose) asparagine; by host glycan. 4 disulfide bridges follow: C429-C552, C452-C459, C486-C494, and C503-C508. The HVR2 stretch occupies residues Y474–G479. Residues P480–P493 are CD81-binding 1. N-linked (GlcNAc...) asparagine; by host glycosylation occurs at N540. The tract at residues P544–G551 is CD81-binding 2. N556 carries N-linked (GlcNAc...) (high mannose) asparagine; by host glycosylation. Cysteines 564 and 569 form a disulfide. N-linked (GlcNAc...) (high mannose) asparagine; by host glycosylation is present at N576. 3 cysteine pairs are disulfide-bonded: C581–C585, C597–C620, and C607–C644. N623 and N645 each carry an N-linked (GlcNAc...) (high mannose) asparagine; by host glycan. A disulfide bridge links C652 with C677. Residues S660–Q671 form a PKR/eIF2-alpha phosphorylation homology domain (PePHD) region. The helical transmembrane segment at L726–A746 threads the bilayer. At A747–A757 the chain is on the lumenal side. Residues S758–L778 form a helical membrane-spanning segment. Topologically, residues R779–K781 are cytoplasmic. A helical membrane pass occupies residues W782 to L803. Topologically, residues P804 to E813 are lumenal. Residues V814–L829 traverse the membrane as a helical segment.

This sequence belongs to the hepacivirus polyprotein family. Homooligomer. Interacts with E1 (via C-terminus). Interacts with the non-structural protein 5A. Interacts (via N-terminus) with host STAT1 (via SH2 domain); this interaction results in decreased STAT1 phosphorylation and ubiquitin-mediated proteasome-dependent STAT1 degradation, leading to decreased IFN-stimulated gene transcription. Interacts with host STAT3; this interaction constitutively activates STAT3. Interacts with host LTBR receptor. Interacts with host TNFRSF1A receptor and possibly induces apoptosis. Interacts with host HNRPK. Interacts with host YWHAE. Interacts with host UBE3A/E6AP. Interacts with host DDX3X. Interacts with host APOA2. Interacts with host RXRA protein. Interacts with host SP110 isoform 3/Sp110b; this interaction sequesters the transcriptional corepressor SP110 away from the nucleus. Interacts with host CREB3 nuclear transcription protein; this interaction triggers cell transformation. Interacts with host ACY3. Interacts with host C1QR1. Interacts with host RBM24; this interaction, which enhances the interaction of the mature core protein with 5'-UTR, may inhibit viral translation and favor replication. Interacts with host EIF2AK2/PKR; this interaction induces the autophosphorylation of EIF2AK2. Part of the viral assembly initiation complex composed of NS2, E1, E2, NS3, NS4A, NS5A and the mature core protein. In terms of assembly, forms a heterodimer with envelope glycoprotein E2. Interacts with mature core protein. Interacts with protease NS2. The heterodimer E1/E2 interacts with host CLDN1; this interaction plays a role in viral entry into host cell. Interacts with host SPSB2 (via C-terminus). Part of the viral assembly initiation complex composed of NS2, E1, E2, NS3, NS4A, NS5A and the mature core protein. As to quaternary structure, forms a heterodimer with envelope glycoprotein E1. Interacts with host CD81 and SCARB1 receptors; these interactions play a role in viral entry into host cell. Interacts with host EIF2AK2/PKR; this interaction inhibits EIF2AK2 and probably allows the virus to evade the innate immune response. Interacts with host CD209/DC-SIGN and CLEC4M/DC-SIGNR. Interact with host SPCS1; this interaction is essential for viral particle assembly. Interacts with protease NS2. The heterodimer E1/E2 interacts with host CLDN1; this interaction plays a role in viral entry into host cell. Part of the viral assembly initiation complex composed of NS2, E1, E2, NS3, NS4A, NS5A and the mature core protein. Homohexamer. Homoheptamer. Interacts with protease NS2. In terms of assembly, homodimer. Interacts with host SPCS1; this interaction is essential for viral particle assembly. Interacts with envelope glycoprotein E1. Interacts with envelope glycoprotein E2. Interacts with viroporin p7. Interacts with serine protease/helicase NS3. Part of the replication complex composed of NS2, NS3, NS4A, NS4B, NS5A and the RNA-directed RNA polymerase embedded in an ER-derived membranous web. Part of the viral assembly initiation complex composed of NS2, E1, E2, NS3, NS4A, NS5A and the mature core protein. The cofactor is Zn(2+). Post-translationally, specific enzymatic cleavages in vivo yield mature proteins. The structural proteins, core, E1, E2 and p7 are produced by proteolytic processing by host signal peptidases. The core protein precursor is synthesized as a 23 kDa, which is retained in the ER membrane through the hydrophobic signal peptide. Cleavage by the signal peptidase releases the 21 kDa mature core protein. The cleavage of the core protein precursor occurs between aminoacids 176 and 188 but the exact cleavage site is not known. Some degraded forms of the core protein appear as well during the course of infection. The other proteins (p7, NS2, NS3, NS4A, NS4B, NS5A and NS5B) are cleaved by the viral proteases. Autoprocessing between NS2 and NS3 is mediated by the NS2 cysteine protease catalytic domain and regulated by the NS3 N-terminal domain. Phosphorylated by host PKC and PKA. In terms of processing, ubiquitinated; mediated by UBE3A and leading to core protein subsequent proteasomal degradation. Post-translationally, highly N-glycosylated. Palmitoylation is required for NS2/3 autoprocessing and E2 recruitment to membranes.

It localises to the host endoplasmic reticulum membrane. The protein localises to the host mitochondrion membrane. The protein resides in the virion. It is found in the host cytoplasm. Its subcellular location is the host nucleus. It localises to the host lipid droplet. The protein localises to the virion membrane. The protein resides in the host mitochondrion. It is found in the host cell membrane. With respect to regulation, inhibited by the antiviral drug hexamethylene amiloride. Inhibition by amantadine appears to be genotype-dependent. Also inhibited by long-alkyl-chain iminosugar derivatives. Functionally, packages viral RNA to form a viral nucleocapsid, and promotes virion budding. Participates in the viral particle production as a result of its interaction with the non-structural protein 5A. Binds RNA and may function as a RNA chaperone to induce the RNA structural rearrangements taking place during virus replication. Modulates viral translation initiation by interacting with viral IRES and 40S ribosomal subunit. Affects various cell signaling pathways, host immunity and lipid metabolism. Prevents the establishment of cellular antiviral state by blocking the interferon-alpha/beta (IFN-alpha/beta) and IFN-gamma signaling pathways and by blocking the formation of phosphorylated STAT1 and promoting ubiquitin-mediated proteasome-dependent degradation of STAT1. Activates STAT3 leading to cellular transformation. Regulates the activity of cellular genes, including c-myc and c-fos. May repress the promoter of p53, and sequester CREB3 and SP110 isoform 3/Sp110b in the cytoplasm. Represses cell cycle negative regulating factor CDKN1A, thereby interrupting an important check point of normal cell cycle regulation. Targets transcription factors involved in the regulation of inflammatory responses and in the immune response: suppresses TNF-induced NF-kappa-B activation, and activates AP-1. Binds to dendritic cells (DCs) via C1QR1, resulting in down-regulation of T-lymphocytes proliferation. Alters lipid metabolism by interacting with hepatocellular proteins involved in lipid accumulation and storage. Induces up-regulation of FAS promoter activity, and thereby contributes to the increased triglyceride accumulation in hepatocytes (steatosis). Its function is as follows. Forms a heterodimer with envelope glycoprotein E2, which mediates virus attachment to the host cell, virion internalization through clathrin-dependent endocytosis and fusion with host membrane. Fusion with the host cell is most likely mediated by both E1 and E2, through conformational rearrangements of the heterodimer required for fusion rather than a classical class II fusion mechanism. E1/E2 heterodimer binds host apolipoproteins such as APOB and ApoE thereby forming a lipo-viro-particle (LVP). APOE associated to the LVP allows the initial virus attachment to cell surface receptors such as the heparan sulfate proteoglycans (HSPGs), syndecan-1 (SDC1), syndecan-1 (SDC2), the low-density lipoprotein receptor (LDLR) and scavenger receptor class B type I (SCARB1). The cholesterol transfer activity of SCARB1 allows E2 exposure and binding of E2 to SCARB1 and the tetraspanin CD81. E1/E2 heterodimer binding on CD81 activates the epithelial growth factor receptor (EGFR) signaling pathway. Diffusion of the complex E1-E2-EGFR-SCARB1-CD81 to the cell lateral membrane allows further interaction with Claudin 1 (CLDN1) and occludin (OCLN) to finally trigger HCV entry. Forms a heterodimer with envelope glycoprotein E1, which mediates virus attachment to the host cell, virion internalization through clathrin-dependent endocytosis and fusion with host membrane. Fusion with the host cell is most likely mediated by both E1 and E2, through conformational rearrangements of the heterodimer required for fusion rather than a classical class II fusion mechanism. The interaction between envelope glycoprotein E2 and host apolipoprotein E/APOE allows the proper assembly, maturation and infectivity of the viral particles. This interaction is probably promoted via the up-regulation of cellular autophagy by the virus. E1/E2 heterodimer binds host apolipoproteins such as APOB and APOE thereby forming a lipo-viro-particle (LVP). APOE associated to the LVP allows the initial virus attachment to cell surface receptors such as the heparan sulfate proteoglycans (HSPGs), syndecan-1 (SDC1), syndecan-1 (SDC2), the low-density lipoprotein receptor (LDLR) and scavenger receptor class B type I (SCARB1). The cholesterol transfer activity of SCARB1 allows E2 exposure and binding of E2 to SCARB1 and the tetraspanin CD81. E1/E2 heterodimer binding on CD81 activates the epithelial growth factor receptor (EGFR) signaling pathway. Diffusion of the complex E1-E2-EGFR-SCARB1-CD81 to the cell lateral membrane allows further interaction with Claudin 1 (CLDN1) and occludin (OCLN) to finally trigger HCV entry. Inhibits host EIF2AK2/PKR activation, preventing the establishment of an antiviral state. Viral ligand for CD209/DC-SIGN and CLEC4M/DC-SIGNR, which are respectively found on dendritic cells (DCs), and on liver sinusoidal endothelial cells and macrophage-like cells of lymph node sinuses. These interactions allow the capture of circulating HCV particles by these cells and subsequent facilitated transmission to permissive cells such as hepatocytes and lymphocyte subpopulations. In terms of biological role, ion channel protein that acts as a viroporin and plays an essential role in the assembly, envelopment and secretion of viral particles. Regulates the host cell secretory pathway, which induces the intracellular retention of viral glycoproteins and favors assembly of viral particles. Creates a pore in acidic organelles and releases Ca(2+) and H(+) in the cytoplasm of infected cells, leading to a productive viral infection. High levels of cytoplasmic Ca(2+) may trigger membrane trafficking and transport of viral ER-associated proteins to viroplasms, sites of viral genome replication. This ionic imbalance induces the assembly of the inflammasome complex, which triggers the maturation of pro-IL-1beta into IL-1beta through the action of caspase-1. Targets also host mitochondria and induces mitochondrial depolarization. In addition of its role as a viroporin, acts as a lipid raft adhesion factor. Functionally, cysteine protease required for the proteolytic auto-cleavage between the non-structural proteins NS2 and NS3. The N-terminus of NS3 is required for the function of NS2 protease (active region NS2-3). Promotes the initiation of viral particle assembly by mediating the interaction between structural and non-structural proteins. The protein is Genome polyprotein of Hepatitis C virus (isolate Glasgow) (HCV).